The primary structure comprises 43 residues: Hemolysin H1U (43 aa).

At methionine 1 the chain carries N-formylmethionine.

Belongs to the staphylococcal hemolytic protein family.

The protein resides in the secreted. Its function is as follows. Virulence factor. Causes hemolysis of erythrocytes. Acts synergistically with beta-hemolysins from S.aureus ATCC 25923. Cytotoxic towards human dermal fibroblasts. The chain is Hemolysin H1U from Staphylococcus ureilyticus (Staphylococcus cohnii subsp. urealyticus).